The following is a 481-amino-acid chain: MHMDYHSPYFFGYLLGLIHLLGVVAALHALFTVRTAQGAIAWAMPLFFIPYLTLIPYLIFGARSFYAYIKARRQANQEMHVAMANLNWRPWVEEALTARESESYAALRAMPKLGRMPCLANNQVKLLVNGKATFDAIFAAIEKARDVVLVQFFIIHDDTLGKALQQLLLRKAAEGVQVFVLYDRVGSHALPASYSQQLRNGGVQIHAFATRRGWFNRFQVNFRNHRKIVVVDGLLGFIGGHNVGDEYLGGHPQLSPWRDTHVQISGPVLACLQESFAEDWYWATRQLPPLILPDAYPDNGVLCQALASGPADPQETCSLFFLEAIHSATRRVWITSPYFIPDEAVFAALRLAVLRGVDVRVLIPSRPDHRIVYAASSLFAFEAVRAGVRMFRYQPGFLHQKVVLVDDEVSAIGSANLDNRSFRLNFEITLLTVDRNFADQVEHMLIKDFEQAREITAEDSRDTHRLQQLGMRIARLISPIL.

2 consecutive transmembrane segments (helical) span residues 10–30 and 40–60; these read FFGYLLGLIHLLGVVAALHAL and IAWAMPLFFIPYLTLIPYLIF. 2 PLD phosphodiesterase domains span residues 220-247 and 394-421; these read VNFRNHRKIVVVDGLLGFIGGHNVGDEY and QPGFLHQKVVLVDDEVSAIGSANLDNRS. Active-site residues include His-225, Lys-227, Asp-232, His-399, Lys-401, and Asp-406.

It belongs to the phospholipase D family. Cardiolipin synthase subfamily. ClsA sub-subfamily.

It localises to the cell inner membrane. The catalysed reaction is 2 a 1,2-diacyl-sn-glycero-3-phospho-(1'-sn-glycerol) = a cardiolipin + glycerol. Its function is as follows. Catalyzes the reversible phosphatidyl group transfer from one phosphatidylglycerol molecule to another to form cardiolipin (CL) (diphosphatidylglycerol) and glycerol. The protein is Cardiolipin synthase A of Pseudomonas putida (Arthrobacter siderocapsulatus).